A 233-amino-acid chain; its full sequence is Large ribosomal subunit protein uL1 (233 aa).

This sequence belongs to the universal ribosomal protein uL1 family. In terms of assembly, part of the 50S ribosomal subunit.

Functionally, binds directly to 23S rRNA. The L1 stalk is quite mobile in the ribosome, and is involved in E site tRNA release. Its function is as follows. Protein L1 is also a translational repressor protein, it controls the translation of the L11 operon by binding to its mRNA. In Proteus mirabilis (strain HI4320), this protein is Large ribosomal subunit protein uL1.